We begin with the raw amino-acid sequence, 155 residues long: S-ribosylhomocysteine lyase (155 aa).

Residues histidine 58, histidine 62, and cysteine 125 each coordinate Fe cation.

This sequence belongs to the LuxS family. Homodimer. Fe cation serves as cofactor.

It carries out the reaction S-(5-deoxy-D-ribos-5-yl)-L-homocysteine = (S)-4,5-dihydroxypentane-2,3-dione + L-homocysteine. Its function is as follows. Involved in the synthesis of autoinducer 2 (AI-2) which is secreted by bacteria and is used to communicate both the cell density and the metabolic potential of the environment. The regulation of gene expression in response to changes in cell density is called quorum sensing. Catalyzes the transformation of S-ribosylhomocysteine (RHC) to homocysteine (HC) and 4,5-dihydroxy-2,3-pentadione (DPD). The polypeptide is S-ribosylhomocysteine lyase (Helicobacter pylori (strain Shi470)).